The following is a 587-amino-acid chain: Xyloglucan-specific endo-beta-1,4-glucanase BoGH9A (587 aa).

The first 19 residues, 1–19 (MKIVRYIALFGILSGLAVA), serve as a signal peptide directing secretion. Cysteine 20 carries the N-palmitoyl cysteine lipid modification. Cysteine 20 is lipidated: S-diacylglycerol cysteine. Residue aspartate 185 is the Nucleophile of the active site. Active-site residues include histidine 511 and aspartate 553. The Proton donor role is filled by glutamate 562.

This sequence belongs to the glycosyl hydrolase 9 (cellulase E) family.

It localises to the cell outer membrane. It carries out the reaction xyloglucan + H2O = xyloglucan oligosaccharides.. The protein operates within glucan metabolism; xyloglucan degradation. Catalyzes endohydrolysis of 1,4-beta-D-glucosidic linkages in xyloglucan with retention of the beta-configuration of the glycosyl residues in xyloglucan degradation. Cleaves the backbone of the 3 major types of natural xyloglucans (seed galactoxyloglucan from tamarind kernel, dicot fucogalactoxyloglucan from lettuce leaves, and solanaceous arabinogalactoxyloglucan from tomato fruit), to produce xyloglucan oligosaccharides. May be superfluous in xyloglucan degradation compared to BoGH5A (AC A7LXT7), the other Xyloglucan-specific endo-beta-1,4-glucanase. The sequence is that of Xyloglucan-specific endo-beta-1,4-glucanase BoGH9A from Bacteroides ovatus (strain ATCC 8483 / DSM 1896 / JCM 5824 / BCRC 10623 / CCUG 4943 / NCTC 11153).